Here is a 238-residue protein sequence, read N- to C-terminus: Monocyte to macrophage differentiation factor (238 aa).

Residues 1–28 lie on the Cytoplasmic side of the membrane; it reads MRFKNRFQRFMNHRAPANGRYKPTCYEH. The helical transmembrane segment at 29–49 threads the bilayer; it reads AANCYTHAFLIVPAIVGSALL. The Lumenal segment spans residues 50 to 61; sequence HRLSDDCWEKIT. The helical transmembrane segment at 62–82 threads the bilayer; sequence AWIYGMGLCALFIVSTVFHIV. Residues 83–101 are Cytoplasmic-facing; that stretch reads SWKKSHLRTVEHCFHMCDR. A helical membrane pass occupies residues 102-122; that stretch reads MVIYFFIAASYAPWLNLRELG. Over 123–124 the chain is Lumenal; sequence PL. Residues 125–145 form a helical membrane-spanning segment; it reads ASHMRWFIWLMAAGGTIYVFL. Over 146–151 the chain is Cytoplasmic; sequence YHEKYK. Residues 152 to 172 form a helical membrane-spanning segment; that stretch reads VVELFFYLTMGFSPALVVTSM. Over 173-174 the chain is Lumenal; that stretch reads NN. Residues 175–195 form a helical membrane-spanning segment; it reads TDGLQELACGGLIYCLGVVFF. At 196-198 the chain is on the cytoplasmic side; sequence KSD. A helical membrane pass occupies residues 199–219; that stretch reads GIIPFAHAIWHLFVATAAAVH. At 220–238 the chain is on the lumenal side; it reads YYAIWKYLYRSPTDFMRHL.

Belongs to the ADIPOR family. In terms of tissue distribution, exhibits relatively ubiquitous expression with preferential expression in mature (in vitro differentiated) macrophages.

Its subcellular location is the late endosome membrane. It is found in the lysosome membrane. Functionally, involved in the dynamics of lysosomal membranes associated with microglial activation following brain lesion. The polypeptide is Monocyte to macrophage differentiation factor (Homo sapiens (Human)).